A 161-amino-acid polypeptide reads, in one-letter code: RNA pyrophosphohydrolase (161 aa).

In terms of domain architecture, Nudix hydrolase spans 7 to 149 (KYRPCVGIML…KKEVYKTVIE (143 aa)). The short motif at 40–61 (GGIDDGEKLEQAALRELLEEVG) is the Nudix box element.

It belongs to the Nudix hydrolase family. RppH subfamily. Requires a divalent metal cation as cofactor.

In terms of biological role, accelerates the degradation of transcripts by removing pyrophosphate from the 5'-end of triphosphorylated RNA, leading to a more labile monophosphorylated state that can stimulate subsequent ribonuclease cleavage. This chain is RNA pyrophosphohydrolase, found in Wolbachia sp. subsp. Brugia malayi (strain TRS).